The primary structure comprises 835 residues: Prickle-like protein 1-A (835 aa).

Residues 14-122 (FGCQRSSTSD…NIKMLSRAVM (109 aa)) form the PET domain. 3 consecutive LIM zinc-binding domains span residues 124–188 (ATCE…ELLK), 189–249 (PRCS…HYAE), and 250–313 (YCES…EDVH). Disordered regions lie at residues 312 to 346 (VHASDSSDSAFQSARSRESRRSVRMGKSSRSADQC), 426 to 455 (LFQQPPEDNRSNDHWMSENIKGKNDLQRNN), 603 to 706 (CQEK…RKRS), and 769 to 835 (CSSS…CIIS). Composition is skewed to basic and acidic residues over residues 432–453 (EDNRSNDHWMSENIKGKNDLQR), 603–614 (CQEKPPPEEKPM), and 646–655 (EIRRPPMSER). Basic residues-rich tracts occupy residues 669–683 (RPHHHHHHRRRKSRK) and 819–835 (SKSKKKKGHKGKNCIIS). Position 832 is a cysteine methyl ester (cysteine 832). Cysteine 832 is lipidated: S-farnesyl cysteine. The propeptide at 833–835 (IIS) is removed in mature form.

Belongs to the prickle / espinas / testin family. Interacts with dvl2/dsh and mapk8/jnk1. Expressed in the dorsal marginal zone of early gastrulae (stage 10). As gastrulation proceeds, expression expands to include the lateral and ventral marginal zones, excluding the few rows of cells above the blastopore lip. Expression moves dorsally with gastrulation cell movements, and by the end of gastrulation expression is seen in dorsal mesoderm and posterior but not anterior neural ectoderm. Expression becomes down-regulated in mesoderm but remains strong in posterior ectoderm through the neurula stages. During tailbud stages, expressed in the pronephric duct, tailbud, tailtip and forming somites. In the most posterior regions, expressed in notochord and in the floorplate of the neural tube with weak expression in the roofplate. At stage 30, expressed in a complex pattern in the head including strong expression in the lens and otic vesicle.

The protein resides in the cell membrane. Its function is as follows. Acts in a planar cell polarity (PCP) complex; polarization along the apical/basal axis of epithelial cells. Regulates the polarized assembly of fibronectrin on the surface of the mesoderm during gastrulation. Essential for gastrulation cell movements, cooperating with dvl2/dsh to activate jnk. Acts together with tes to control axial elongation. The protein is Prickle-like protein 1-A (prickle1-a) of Xenopus laevis (African clawed frog).